The chain runs to 653 residues: Fructose-1,6-bisphosphatase class 3 (653 aa).

The protein belongs to the FBPase class 3 family. It depends on Mn(2+) as a cofactor.

The enzyme catalyses beta-D-fructose 1,6-bisphosphate + H2O = beta-D-fructose 6-phosphate + phosphate. It participates in carbohydrate biosynthesis; gluconeogenesis. The protein is Fructose-1,6-bisphosphatase class 3 of Listeria monocytogenes serotype 4b (strain CLIP80459).